The sequence spans 250 residues: Oil body-associated protein 2B (250 aa).

The segment at 1 to 29 is disordered; that stretch reads MSSSDQNPAATPASSGPAEPSPPGRPTAV. Over residues 8–18 the composition is skewed to low complexity; that stretch reads PAATPASSGPA.

It belongs to the OBAP family.

The chain is Oil body-associated protein 2B from Zea mays (Maize).